We begin with the raw amino-acid sequence, 97 residues long: Ribosomal biogenesis factor (97 aa).

Ser-19 carries the phosphoserine modification. At Lys-21 the chain carries N6-acetyllysine. Ser-69 carries the post-translational modification Phosphoserine.

In terms of assembly, associates with the pre-60S ribosomal particles.

Its subcellular location is the nucleus. It localises to the nucleolus. Functionally, trans-acting factor in ribosome biogenesis required for efficient 40S and 60S subunit production. This is Ribosomal biogenesis factor (Rbis) from Mus musculus (Mouse).